The sequence spans 496 residues: Probable histidine ammonia-lyase (496 aa).

Residues 141 to 143 (ASG) constitute a cross-link (5-imidazolinone (Ala-Gly)). The residue at position 142 (S142) is a 2,3-didehydroalanine (Ser).

It belongs to the PAL/histidase family. Post-translationally, contains an active site 4-methylidene-imidazol-5-one (MIO), which is formed autocatalytically by cyclization and dehydration of residues Ala-Ser-Gly.

The protein resides in the cytoplasm. It carries out the reaction L-histidine = trans-urocanate + NH4(+). It functions in the pathway amino-acid degradation; L-histidine degradation into L-glutamate; N-formimidoyl-L-glutamate from L-histidine: step 1/3. The polypeptide is Probable histidine ammonia-lyase (Thermoplasma acidophilum (strain ATCC 25905 / DSM 1728 / JCM 9062 / NBRC 15155 / AMRC-C165)).